The chain runs to 913 residues: Auxilin (913 aa).

An N-acetylmethionine modification is found at methionine 1. 3 consecutive repeat copies span residues 36 to 39, 40 to 43, and 44 to 47. The 3 X 4 AA approximate tandem repeats stretch occupies residues 36–47; the sequence is NLKDNLKDTLKD. The Phosphatase tensin-type domain maps to 55 to 222; that stretch reads SVTSYTKGDL…GYMCDLLADK (168 aa). Serine 112 carries the phosphoserine modification. The Phosphocysteine intermediate role is filled by cysteine 164. Positions 228 to 366 constitute a C2 tensin-type domain; the sequence is FKPLTIKSIT…FQVTLDVELQ (139 aa). Residues 409–417 carry the SH3-binding motif; sequence PIDIPPDNP. Residues 451 to 776 form a disordered region; sequence QESEQSDDEL…GKGSSNLEGK (326 aa). 2 positions are modified to phosphoserine: serine 453 and serine 456. Residues 506 to 523 show a composition bias toward polar residues; that stretch reads AMSNSFSPPAAPPTNSEL. A compositionally biased stretch (low complexity) spans 554-572; that stretch reads ASTQSTPRRSATSTSASPT. Phosphoserine is present on residues serine 563 and serine 570. Over residues 599–629 the composition is skewed to polar residues; the sequence is FLNTSSASSDPFLQPTRSPSPTVHASSTPAV. Over residues 654-669 the composition is skewed to low complexity; that stretch reads SAATSPTGSSHGTPTH. One can recognise a J domain in the interval 849 to 913; it reads TKWKPVGMAD…FENQGQKPLY (65 aa).

As to quaternary structure, forms a complex composed of HSPA8, CLTC and DNAJC6. Interacts with HSPA8/HSC70 in an ATP-dependent manner; this interaction stimulates the HSPA8's ATPase activity. Interacts with CLTC; this interaction produces a local change in heavy-chain contacts, creating a detectable global distortion of the clathrin coat. Interacts with AP2A2. Interacts with DNM1(GTP-bound form); this interaction allows clathrin-coated vesicle (CCV) formation at the plasma membrane. Post-translationally, phosphorylation at Ser-570 modulates its ability to bind CLTC and therefore the synaptic vesicle endocytosis (SVE). In terms of processing, the N-terminus is blocked. In terms of tissue distribution, expressed in various brain regions, including cerebellum, corpus callosum, cortex, striatum, brainstem, pons, putamen, spinal cord and substantia nigra. Very low expression in non-neural tissues such as leukocytes, liver, adipose tissue, skeletal muscle and bone marrow.

The protein localises to the cytoplasmic vesicle. It is found in the clathrin-coated vesicle. Functionally, may act as a protein phosphatase and/or a lipid phosphatase. Co-chaperone that recruits HSPA8/HSC70 to clathrin-coated vesicles (CCVs) and promotes the ATP-dependent dissociation of clathrin from CCVs and participates in clathrin-mediated endocytosis of synaptic vesicles and their recycling and also in intracellular trafficking. Firstly, binds tightly to the clathrin cages, at a ratio of one DNAJC6 per clathrin triskelion. The HSPA8:ATP complex then binds to the clathrin-auxilin cage, initially at a ratio of one HSPA8 per triskelion leading to ATP hydrolysis stimulation and causing a conformational change in the HSPA8. This cycle is repeated three times to drive to a complex containing the clathrin-auxilin cage associated to three HSPA8:ADP complex. The ATP hydrolysis of the third HSPA8:ATP complex leads to a concerted dismantling of the cage into component triskelia. Then, dissociates from the released triskelia and be recycled to initiate another cycle of HSPA8's recruitment. Also acts during the early steps of clathrin-coated vesicle (CCV) formation through its interaction with the GTP bound form of DNM1. The sequence is that of Auxilin from Homo sapiens (Human).